The following is a 152-amino-acid chain: Large-conductance mechanosensitive channel (152 aa).

Helical transmembrane passes span 14–34 (VIDL…VTSL) and 81–101 (GLFL…FIAI).

It belongs to the MscL family. In terms of assembly, homopentamer.

The protein localises to the cell membrane. Channel that opens in response to stretch forces in the membrane lipid bilayer. May participate in the regulation of osmotic pressure changes within the cell. The polypeptide is Large-conductance mechanosensitive channel (Clostridium perfringens (strain 13 / Type A)).